The primary structure comprises 427 residues: UPF0761 membrane protein Plut_1323 (427 aa).

The next 6 membrane-spanning stretches (helical) occupy residues 51-71 (LLSIVPLLAVVLSILNVFAVF), 105-125 (TFTMPIFGALFLFIVALVLIS), 147-167 (FTLYWTVLTLGPVLLATSLAA), 188-208 (LLSLLPSTITVLALLLLYLLV), 221-241 (GALVATLLFEVSKRWFAFYVA), and 251-271 (GALSVIPMLFFWIYLGWVVVL).

The protein belongs to the UPF0761 family.

It localises to the cell inner membrane. This is UPF0761 membrane protein Plut_1323 from Chlorobium luteolum (strain DSM 273 / BCRC 81028 / 2530) (Pelodictyon luteolum).